Here is a 39-residue protein sequence, read N- to C-terminus: Cytochrome b559 subunit beta (39 aa).

A helical membrane pass occupies residues 14 to 30 (WLAVHGLAIPTVFFLGS). Heme is bound at residue His-18.

This sequence belongs to the PsbE/PsbF family. In terms of assembly, heterodimer of an alpha subunit and a beta subunit. PSII is composed of 1 copy each of membrane proteins PsbA, PsbB, PsbC, PsbD, PsbE, PsbF, PsbH, PsbI, PsbJ, PsbK, PsbL, PsbM, PsbT, PsbX, PsbY, PsbZ, Psb30/Ycf12, at least 3 peripheral proteins of the oxygen-evolving complex and a large number of cofactors. It forms dimeric complexes. Heme b is required as a cofactor.

The protein localises to the plastid membrane. In terms of biological role, this b-type cytochrome is tightly associated with the reaction center of photosystem II (PSII). PSII is a light-driven water:plastoquinone oxidoreductase that uses light energy to abstract electrons from H(2)O, generating O(2) and a proton gradient subsequently used for ATP formation. It consists of a core antenna complex that captures photons, and an electron transfer chain that converts photonic excitation into a charge separation. This chain is Cytochrome b559 subunit beta, found in Cuscuta gronovii (Common dodder).